Consider the following 562-residue polypeptide: Protein wntless (562 aa).

Residues 1 to 13 lie on the Cytoplasmic side of the membrane; the sequence is MSGTILENLSGRK. The helical transmembrane segment at 14-34 threads the bilayer; that stretch reads LSILVSSLMLCQVACFLMGGL. The Lumenal segment spans residues 35 to 239; that stretch reads YAPVPAGHQT…AIHQNGGFTQ (205 aa). Asparagine 58 and asparagine 103 each carry an N-linked (GlcNAc...) asparagine glycan. The chain crosses the membrane as a helical span at residues 240-260; sequence VWLLLKTLLFPFVVGIMIWFW. The Cytoplasmic segment spans residues 261 to 270; the sequence is RRVHILQRSP. The helical transmembrane segment at 271–291 threads the bilayer; that stretch reads ALLEYMLLYLGGALSFLNLPL. At 292–311 the chain is on the lumenal side; that stretch reads EYLTLSIEMPYMLLLSDVRQ. The chain crosses the membrane as a helical span at residues 312–332; the sequence is GIFYAMLLSFWLVFAGEHMLI. The Cytoplasmic segment spans residues 333-344; the sequence is QDTPNKSTIRSR. The chain crosses the membrane as a helical span at residues 345 to 365; the sequence is YWKHLSAVVVGCISLFVFDIC. The Lumenal segment spans residues 366–390; that stretch reads ERGVQLRNPFYSIWTTPLGAKVAMS. The chain crosses the membrane as a helical span at residues 391-411; the sequence is FIVLAGVSAAIYFLFLCFMVW. Residues 412 to 441 lie on the Cytoplasmic side of the membrane; the sequence is KVFKDIGDKRTSLPSMSQARRLHYEGLIYR. A helical membrane pass occupies residues 442–462; it reads FKFLMLATLLCAGLTVAGFIM. The Lumenal segment spans residues 463–482; it reads GQMAEGHWKWNEDIEIQLTS. The chain crosses the membrane as a helical span at residues 483–503; sequence AFLTGVYGMWNIYIFALIILY. At 504–562 the chain is on the cytoplasmic side; sequence APSHKQWPTMRHSDETTQSNENIVASAASEEIEFSNLPSDSNPSEISSLTSFTRKVAFD.

It belongs to the wntless family. In terms of assembly, interacts with wg; in the Golgi. Interacts with Vps35, a component of the retromer complex; wls stability is regulated by Vps35.

It localises to the presynaptic cell membrane. The protein resides in the postsynaptic cell membrane. Its subcellular location is the cell membrane. It is found in the endoplasmic reticulum membrane. The protein localises to the endosome membrane. It localises to the golgi apparatus membrane. A segment polarity gene required for wingless (wg)-dependent patterning processes, acting in both wg-sending cells and wg-target cells. In non-neuronal cells wls directs wg secretion. The wls traffic loop encompasses the Golgi, the cell surface, an endocytic compartment and a retrograde route leading back to the Golgi, and involves clathrin-mediated endocytosis and the retromer complex (a conserved protein complex consisting of Vps35 and Vps26). In neuronal cells (the larval motorneuron NMJ), the wg signal moves across the synapse via the release of wls-containing exosome-like vesicles. Postsynaptic wls is required for the trafficking of fz2 through the fz2-interacting protein Grip. In Drosophila virilis (Fruit fly), this protein is Protein wntless.